Here is a 109-residue protein sequence, read N- to C-terminus: Class I hydrophobin SC1 (109 aa).

The first 22 residues, 1-22 (MRFSLAILALPVLAAATAVPRG), serve as a signal peptide directing secretion. 4 disulfides stabilise this stretch: Cys-27-Cys-88, Cys-34-Cys-82, Cys-35-Cys-69, and Cys-89-Cys-102.

Belongs to the fungal hydrophobin family. In terms of assembly, self-assembles to form functional amyloid fibrils called rodlets. Self-assembly into fibrillar rodlets occurs spontaneously at hydrophobic:hydrophilic interfaces and the rodlets further associate laterally to form amphipathic monolayers.

The protein resides in the secreted. The protein localises to the cell wall. Functionally, aerial growth, conidiation, and dispersal of filamentous fungi in the environment rely upon a capability of their secreting small amphipathic proteins called hydrophobins (HPBs) with low sequence identity. Class I can self-assemble into an outermost layer of rodlet bundles on aerial cell surfaces, conferring cellular hydrophobicity that supports fungal growth, development and dispersal; whereas Class II form highly ordered films at water-air interfaces through intermolecular interactions but contribute nothing to the rodlet structure. SC1 is a dikaryon-specific class I hydrophobin that contributes to the formation of aerial hyphae and fruiting bodies. The chain is Class I hydrophobin SC1 from Schizophyllum commune (Split gill fungus).